Consider the following 1297-residue polypeptide: Phosphoribosylformylglycinamidine synthase (1297 aa).

The tract at residues F305 to R324 is disordered. Residue G307–D318 coordinates ATP. The Mg(2+) site is built by D679, E718, N722, and D886. Residue S888 participates in ATP binding. In terms of domain architecture, Glutamine amidotransferase type-1 spans I1044–K1297. C1137 serves as the catalytic Nucleophile. Catalysis depends on residues H1262 and E1264.

In the N-terminal section; belongs to the FGAMS family. In terms of assembly, monomer.

The protein localises to the cytoplasm. It carries out the reaction N(2)-formyl-N(1)-(5-phospho-beta-D-ribosyl)glycinamide + L-glutamine + ATP + H2O = 2-formamido-N(1)-(5-O-phospho-beta-D-ribosyl)acetamidine + L-glutamate + ADP + phosphate + H(+). It participates in purine metabolism; IMP biosynthesis via de novo pathway; 5-amino-1-(5-phospho-D-ribosyl)imidazole from N(2)-formyl-N(1)-(5-phospho-D-ribosyl)glycinamide: step 1/2. Its function is as follows. Phosphoribosylformylglycinamidine synthase involved in the purines biosynthetic pathway. Catalyzes the ATP-dependent conversion of formylglycinamide ribonucleotide (FGAR) and glutamine to yield formylglycinamidine ribonucleotide (FGAM) and glutamate. The protein is Phosphoribosylformylglycinamidine synthase of Mannheimia succiniciproducens (strain KCTC 0769BP / MBEL55E).